The following is a 171-amino-acid chain: Dual specificity protein phosphatase OPG106 (171 aa).

In terms of domain architecture, Tyrosine-protein phosphatase spans 23 to 171 (SPTIMTRVTN…IIEKYVIDKN (149 aa)). The active-site Phosphocysteine intermediate is cysteine 110.

The protein belongs to the protein-tyrosine phosphatase family. Non-receptor class dual specificity subfamily. Homodimer.

It is found in the virion. It localises to the host cytoplasm. It carries out the reaction O-phospho-L-tyrosyl-[protein] + H2O = L-tyrosyl-[protein] + phosphate. The enzyme catalyses O-phospho-L-seryl-[protein] + H2O = L-seryl-[protein] + phosphate. Its function is as follows. Serine/tyrosine phosphatase which down-regulates cellular antiviral response by dephosphorylating activated host STAT1 and blocking interferon (IFN)-stimulated innate immune responses. Dephosphorylates the OPG144 protein. The polypeptide is Dual specificity protein phosphatase OPG106 (OPG106) (Homo sapiens (Human)).